The sequence spans 299 residues: UDP-N-acetylenolpyruvoylglucosamine reductase (299 aa).

One can recognise an FAD-binding PCMH-type domain in the interval G26–S191. Residue R170 is part of the active site. C218 acts as the Proton donor in catalysis. The active site involves E288.

The protein belongs to the MurB family. FAD is required as a cofactor.

Its subcellular location is the cytoplasm. It catalyses the reaction UDP-N-acetyl-alpha-D-muramate + NADP(+) = UDP-N-acetyl-3-O-(1-carboxyvinyl)-alpha-D-glucosamine + NADPH + H(+). It functions in the pathway cell wall biogenesis; peptidoglycan biosynthesis. In terms of biological role, cell wall formation. The chain is UDP-N-acetylenolpyruvoylglucosamine reductase from Protochlamydia amoebophila (strain UWE25).